The following is a 622-amino-acid chain: MRLLRRRHMSLRLAMLGSVFMLFLFIRQKDVSNQEQAMEKPWLKSLAGQKDQVLDFMLGAVNNIRDVMPKLQIRAPEPPQTLVSTNHSCLPGFYTPAELKPFWDRPPQDPNSPGADGKAFQKKEWTNLETKEKEEGYKKHCFNAFASDRISLQRSLGPDTRPPECVDQKFRRCPPLPTTSVIIVFHNEAWSTLLRTVYSVLHTSPAILLKEIILVDDASTDEHLKERLEQYVQQLQIVRVVRQRERKGLITARLLGASVAQAEVLTFLDAHCECFHGWLEPLLARIAEDKTAVVSPDIVTIDLNTFQFSRPVQRGKAHSRGNFDWSLTFGWEMLPEHEKQRRKDETYPIKSPTFAGGLFSISKAYFEHIGTYDNQMEIWGGENVEMSFRVWQCGGQLEIIPCSVVGHVFRTKSPHTFPKGTSVIARNQVRLAEVWMDDYKKIFYRRNLQAAKMVQENNFGDISERLRLREQLRCHNFSWYLHNVYPEMFVPDLNPTFYGAIKNLGTNQCLDVGENNRGGKPLIMYVCHNLGGNQYFEYTSQRDLRHNIGKQLCLHASGSTLGLRSCQFVGKNSRVPKDEEWELTQDQLIRNSGSGTCLTSQDKKPAMAPCNPRDPYQLWLFV.

Over 1–8 (MRLLRRRH) the chain is Cytoplasmic. Residues 9-28 (MSLRLAMLGSVFMLFLFIRQ) traverse the membrane as a helical; Signal-anchor for type II membrane protein segment. The Lumenal segment spans residues 29-622 (KDVSNQEQAM…RDPYQLWLFV (594 aa)). N86 carries N-linked (GlcNAc...) asparagine glycosylation. A catalytic subdomain A region spans residues 176–285 (LPTTSVIIVF…HGWLEPLLAR (110 aa)). Residues D269, H271, and H407 each contribute to the Mn(2+) site. The segment at 348 to 410 (PIKSPTFAGG…PCSVVGHVFR (63 aa)) is catalytic subdomain B. Residue N476 is glycosylated (N-linked (GlcNAc...) asparagine). A Ricin B-type lectin domain is found at 506–622 (TNQCLDVGEN…RDPYQLWLFV (117 aa)). A disulfide bond links C509 and C527. 4 residues coordinate UDP-N-acetyl-alpha-D-galactosamine: D511, E514, H528, and N533. Disulfide bonds link C553-C566 and C597-C610.

The protein belongs to the glycosyltransferase 2 family. GalNAc-T subfamily. The cofactor is Mn(2+).

It localises to the golgi apparatus membrane. The catalysed reaction is L-seryl-[protein] + UDP-N-acetyl-alpha-D-galactosamine = a 3-O-[N-acetyl-alpha-D-galactosaminyl]-L-seryl-[protein] + UDP + H(+). It carries out the reaction L-threonyl-[protein] + UDP-N-acetyl-alpha-D-galactosamine = a 3-O-[N-acetyl-alpha-D-galactosaminyl]-L-threonyl-[protein] + UDP + H(+). The protein operates within protein modification; protein glycosylation. In terms of biological role, catalyzes the initial reaction in O-linked oligosaccharide biosynthesis, the transfer of an N-acetyl-D-galactosamine residue to a serine or threonine residue on the protein receptor. May participate in synthesis of oncofetal fibronectin. Has activity toward Muc1a, Muc2, EA2 and fibronectin peptides. The sequence is that of Polypeptide N-acetylgalactosaminyltransferase 6 (Galnt6) from Mus musculus (Mouse).